The chain runs to 1444 residues: DNA polymerase III PolC-type (1444 aa).

The 157-residue stretch at 428–584 folds into the Exonuclease domain; that stretch reads YCVFDVETTG…FDAEATAYLA (157 aa).

It belongs to the DNA polymerase type-C family. PolC subfamily.

The protein resides in the cytoplasm. The catalysed reaction is DNA(n) + a 2'-deoxyribonucleoside 5'-triphosphate = DNA(n+1) + diphosphate. Required for replicative DNA synthesis. This DNA polymerase also exhibits 3' to 5' exonuclease activity. The polypeptide is DNA polymerase III PolC-type (Listeria monocytogenes serovar 1/2a (strain ATCC BAA-679 / EGD-e)).